The sequence spans 78 residues: TP53-regulated inhibitor of apoptosis 1 (78 aa).

Residues 1–52 (MNSVGEECTDMKREYDQCFNRWFAEKFLKGECSGDPCTELFRRYRDCVQKAI) are a coiled coil. The CHCH domain occupies 5 to 55 (GEECTDMKREYDQCFNRWFAEKFLKGECSGDPCTELFRRYRDCVQKAIKDK). 2 consecutive short sequence motifs (cx9C motif) follow at residues 8–18 (CTDMKREYDQC) and 37–47 (CTELFRRYRDC). 2 disulfide bridges follow: Cys-8–Cys-47 and Cys-18–Cys-37.

The protein belongs to the TRIAP1/MDM35 family. Monomer. Forms a complex with prelid1 in the mitochondrion intermembrane space. Interacts with prelid3a. In terms of tissue distribution, expressed in the developing pronephros.

It is found in the mitochondrion. Its subcellular location is the mitochondrion intermembrane space. The catalysed reaction is a 1,2-diacyl-sn-glycero-3-phosphate(in) = a 1,2-diacyl-sn-glycero-3-phosphate(out). Involved in the modulation of the mitochondrial apoptotic pathway by ensuring the accumulation of cardiolipin (CL) in mitochondrial membranes. The triap1:prelid1 complex probably functions as a phosphatidic acid (PA) transporter across the mitochondrion intermembrane space to provide PA for cardiolipin CL synthesis in the inner membrane. Likewise, the triap1:prelid3a complex mediates the transfer of phosphatidic acid (PA) between liposomes (in vitro) and probably functions as a PA transporter across the mitochondrion intermembrane space (in vivo). Mediates cell survival by inhibiting activation of caspase-9 which prevents induction of apoptosis. Required for pronephros development; probably involved at an early stage in the formation of pronephric components derived from the somatic layer. The chain is TP53-regulated inhibitor of apoptosis 1 from Xenopus tropicalis (Western clawed frog).